The following is a 683-amino-acid chain: Kinesin-like protein KIF2B (683 aa).

Threonine 125 bears the Phosphothreonine; by PLK1 mark. The stretch at 141-176 forms a coiled coil; the sequence is LMTQRKSACLREIEKLQKQRERRRRLHREIRAQRAR. Serine 204 bears the Phosphoserine; by PLK1 mark. The Kinesin motor domain maps to 213–543; it reads RICVCVRKRP…LRYANRVKEI (331 aa). 303–310 contacts ATP; that stretch reads GQTGSGKT. The stretch at 640–672 forms a coiled coil; that stretch reads QLLSILEKKIDILTEIRRKLKLLQADIQKENRH.

The protein belongs to the TRAFAC class myosin-kinesin ATPase superfamily. Kinesin family. MCAK/KIF2 subfamily. Phosphorylation at Thr-125 by PLK1 is required for activity in the correction of kinetochore-microtubules attachment errors, while phosphorylation at Ser-204 also by PLK1 is required for the kinetochore localization and activity in prometaphase.

Its subcellular location is the cytoplasm. It is found in the cytoskeleton. It localises to the microtubule organizing center. The protein resides in the centrosome. The protein localises to the spindle. Its subcellular location is the chromosome. It is found in the centromere. It localises to the kinetochore. Plus end-directed microtubule-dependent motor required for spindle assembly and chromosome movement during mitosis. Has microtubule depolymerization activity. Plays a role in chromosome congression. In Bos taurus (Bovine), this protein is Kinesin-like protein KIF2B.